Reading from the N-terminus, the 165-residue chain is Large ribosomal subunit protein uL10 (165 aa).

Belongs to the universal ribosomal protein uL10 family. In terms of assembly, part of the ribosomal stalk of the 50S ribosomal subunit. The N-terminus interacts with L11 and the large rRNA to form the base of the stalk. The C-terminus forms an elongated spine to which L12 dimers bind in a sequential fashion forming a multimeric L10(L12)X complex.

Functionally, forms part of the ribosomal stalk, playing a central role in the interaction of the ribosome with GTP-bound translation factors. This is Large ribosomal subunit protein uL10 from Buchnera aphidicola subsp. Acyrthosiphon pisum (strain 5A).